Here is a 149-residue protein sequence, read N- to C-terminus: uncharacterized protein (149 aa).

One can recognise an N-acetyltransferase domain in the interval 1 to 149 (MNIRQAKTSD…VHYCLNVPAK (149 aa)).

Belongs to the acetyltransferase family.

This is an uncharacterized protein from Bacillus subtilis (strain 168).